A 284-amino-acid chain; its full sequence is Ermin (284 aa).

The segment at 1-61 is disordered; that stretch reads MTDVPATFTQ…APTKGSQEER (61 aa). Serine 73 carries the post-translational modification Phosphoserine. A disordered region spans residues 108–251; sequence TFREGRQWEK…PTLGKKSDIS (144 aa). 2 stretches are compositionally biased toward basic and acidic residues: residues 126–140 and 171–183; these read EIRR…QPLK and LHSK…KVWD. Positions 184-200 are enriched in acidic residues; the sequence is EEIDDDDDDNCNDDEDE. Over residues 201 to 220 the composition is skewed to basic and acidic residues; it reads VRVIEFKKKHEEVSQFKEEG. A phosphoserine mark is found at serine 214, serine 226, serine 230, and serine 233. The span at 225-235 shows a compositional bias: low complexity; it reads DSPLSSASSQA. Residue threonine 237 is modified to Phosphothreonine. The interval 265-284 is binds actin; the sequence is KIRKGNTKQRIDEFESMMHL.

As to quaternary structure, binds actin.

The protein resides in the cytoplasm. Its subcellular location is the cytoskeleton. Functionally, plays a role in cytoskeletal rearrangements during the late wrapping and/or compaction phases of myelinogenesis as well as in maintenance and stability of myelin sheath in the adult. May play an important role in late-stage oligodendroglia maturation, myelin/Ranvier node formation during CNS development, and in the maintenance and plasticity of related structures in the mature CNS. The polypeptide is Ermin (ERMN) (Pongo abelii (Sumatran orangutan)).